Consider the following 448-residue polypeptide: MANVVENLGKLERRVTISLPKDTVQKEIDARIQKLAKTVRMPGFRPGKVPLKMVAQQYAGQVEAEVLSDKIGQEFFTVSRAENLRVAGQPSFEPKQEQAEDAYAFDATFEVYPEVKIGDLATAEVERSTTSIGDAEIDRTLDILRKQRVHYHARGEAGEHGDGGADTAAKNGDRVTVDFVGKIEDVAFQGGTAEDFPFVLGEGRMLPEFETAALGLKVGEQRTFDLKFPDDYHGKDVAGKTAQFTVTMKKIEWPHLPEIDAEFAKSLGIEDGDLTKMRAEIKENLEREAKRRTQSIVKNQVMDALLKISELDVPKALIEQDQQRLVEMARQDLAQRGVPNAKDAPIPAEMFAEQAERRVKLGLVLAELVKANGLEAKPEQIRAEVDEFAKSYEDPKEVVRWYYSNQQRLAEMEAFVVESNVVDFVLGKAKVTDKEVSFEALASASAQA.

One can recognise a PPIase FKBP-type domain in the interval 172 to 257 (GDRVTVDFVG…MKKIEWPHLP (86 aa)).

This sequence belongs to the FKBP-type PPIase family. Tig subfamily.

Its subcellular location is the cytoplasm. It catalyses the reaction [protein]-peptidylproline (omega=180) = [protein]-peptidylproline (omega=0). Its function is as follows. Involved in protein export. Acts as a chaperone by maintaining the newly synthesized protein in an open conformation. Functions as a peptidyl-prolyl cis-trans isomerase. This chain is Trigger factor, found in Burkholderia cenocepacia (strain HI2424).